The primary structure comprises 1033 residues: Tyrosine-protein kinase-like otk (1033 aa).

A signal peptide spans 1-22 (MTARMISICGLVMALMMASVLA). The Extracellular portion of the chain corresponds to 23 to 581 (SSSRFQRVPQ…GGDGFLVTRA (559 aa)). Ig-like C2-type domains are found at residues 25-114 (SRFQ…AKLS), 113-199 (LSVI…RVMS), 251-365 (PEDL…APIN), 368-463 (PGIL…VAIN), and 468-558 (PKFS…VQLV). Residue N39 is glycosylated (N-linked (GlcNAc...) asparagine). 4 disulfide bridges follow: C46-C95, C137-C188, C276-C354, and C399-C447. 7 N-linked (GlcNAc...) asparagine glycosylation sites follow: N336, N417, N429, N444, N457, N512, and N524. A disulfide bridge links C490 with C542. The helical transmembrane segment at 582–602 (VLITMTVALAYIVLVVGLMLW) threads the bilayer. At 603–1033 (CRYRRQARKA…LSKAMQSAEK (431 aa)) the chain is on the cytoplasmic side. 2 disordered regions span residues 617 to 679 (LSTK…KKSA) and 718 to 760 (SPSD…KTSM). Residues 655-673 (KSSGDAQKSDDTACSQQSR) are compositionally biased toward polar residues. S678 carries the phosphoserine modification. One can recognise a Protein kinase; inactive domain in the interval 692–1028 (LSELIQIGRG…QLGAALSKAM (337 aa)). A compositionally biased stretch (basic and acidic residues) spans 720–731 (SDKDADTEKQHS).

It belongs to the protein kinase superfamily. Tyr protein kinase family. Insulin receptor subfamily. Interacts with plexA; component of a receptor complex that mediates the repulsive signaling in response to Semaphorin ligands. In terms of tissue distribution, dynamically expressed during embryogenesis in several areas of the developing nervous system, including neurons and fasciculating axons. Expression in stage 7 embryos is seen in the anterior midgut primordia, cephalic furrow and along the germinal band. At stage 11, expression is in 15 stripes over the trunk region, and in the anterior and posterior midgut primordia. Stage 12 shows expression in the developing nervous system, procephalic lobe and maxillar bud. Stage 13 shows expression in the ventral cord, maxillar segment and in three regions of the gut. At stage 16 expression is preferentially detected throughout the nervous system, including the neuromers in the ventral cord and the supraesophageal ganglion (at protein level). In larva, expression is seen in developing R cells and is localized predominantly to R1-R6 growth cones.

It localises to the cell membrane. In terms of biological role, acts as a calcium-dependent, homophilic cell adhesion molecule that regulates neural recognition during the development of the nervous system. Component of the repulsive Plexin signaling response to regulate motor axon guidance at the embryonic stage. Also component of a receptor complex that is required in the adult visual system to innervate the lamina layer; specific targeting of R1-R6 axons. The protein is Tyrosine-protein kinase-like otk of Drosophila melanogaster (Fruit fly).